The following is a 269-amino-acid chain: Tryptophan synthase alpha chain (269 aa).

Residues glutamate 49 and aspartate 60 each act as proton acceptor in the active site.

Belongs to the TrpA family. Tetramer of two alpha and two beta chains.

It carries out the reaction (1S,2R)-1-C-(indol-3-yl)glycerol 3-phosphate + L-serine = D-glyceraldehyde 3-phosphate + L-tryptophan + H2O. The protein operates within amino-acid biosynthesis; L-tryptophan biosynthesis; L-tryptophan from chorismate: step 5/5. Functionally, the alpha subunit is responsible for the aldol cleavage of indoleglycerol phosphate to indole and glyceraldehyde 3-phosphate. The sequence is that of Tryptophan synthase alpha chain from Cronobacter sakazakii (strain ATCC BAA-894) (Enterobacter sakazakii).